Reading from the N-terminus, the 379-residue chain is Chaperone protein DnaJ (379 aa).

A J domain is found at 5–70 (DFYEVLGVSR…QKRSAYDQYG (66 aa)). The CR-type zinc-finger motif lies at 134 to 212 (GCDKEIEVPT…CHGEGRVHKT (79 aa)). Residues C147, C150, C164, C167, C186, C189, C200, and C203 each coordinate Zn(2+). CXXCXGXG motif repeat units follow at residues 147-154 (CDPCEGTG), 164-171 (CSTCHGQG), 186-193 (CPTCHGKG), and 200-207 (CNSCHGEG).

The protein belongs to the DnaJ family. As to quaternary structure, homodimer. Requires Zn(2+) as cofactor.

Its subcellular location is the cytoplasm. Participates actively in the response to hyperosmotic and heat shock by preventing the aggregation of stress-denatured proteins and by disaggregating proteins, also in an autonomous, DnaK-independent fashion. Unfolded proteins bind initially to DnaJ; upon interaction with the DnaJ-bound protein, DnaK hydrolyzes its bound ATP, resulting in the formation of a stable complex. GrpE releases ADP from DnaK; ATP binding to DnaK triggers the release of the substrate protein, thus completing the reaction cycle. Several rounds of ATP-dependent interactions between DnaJ, DnaK and GrpE are required for fully efficient folding. Also involved, together with DnaK and GrpE, in the DNA replication of plasmids through activation of initiation proteins. This chain is Chaperone protein DnaJ, found in Aliivibrio fischeri (strain ATCC 700601 / ES114) (Vibrio fischeri).